The chain runs to 391 residues: Steroid side-chain-cleaving aldolase (391 aa).

The active-site Proton acceptor is the Tyr294. Tyr344 functions as the Proton donor in the catalytic mechanism.

This sequence belongs to the thiolase-like superfamily. Homodimer. Interacts with the ChsH1/ChsH2 hydratase via the DUF35 C-terminal region of ChsH2 (ChsH2-DUF35).

The enzyme catalyses 17-hydroxy-3-oxochol-4-en-22-oyl-CoA = androst-4-ene-3,17-dione + propanoyl-CoA. Its function is as follows. Probably involved in bile acid degradation. In vitro, when associated with the ChsH1/ChsH2 hydratase, catalyzes the retroaldol cleavage of 17-hydroxy-3-oxo-4-pregnene-20-carboxyl-CoA (17-HOPC-CoA), forming androst-4-ene-3,17-dione and propionyl-CoA. The in vivo substrate is probably a closely analogous bile acid degradation metabolite. The polypeptide is Steroid side-chain-cleaving aldolase (Thermomonospora curvata (strain ATCC 19995 / DSM 43183 / JCM 3096 / KCTC 9072 / NBRC 15933 / NCIMB 10081 / Henssen B9)).